Reading from the N-terminus, the 808-residue chain is Putative dimethyl sulfoxide reductase chain YnfE (808 aa).

The tat-type signal signal peptide spans 1–43 (MSKNERMVGISRRTLVKSTAIGSLALAAGGFSLPFTLRNAAAA). The 4Fe-4S Mo/W bis-MGD-type domain occupies 49–110 (EKVVWGACSV…SIRRRINHPD (62 aa)). The [4Fe-4S] cluster site is built by cysteine 56, cysteine 60, cysteine 64, and cysteine 96. Mo-bis(molybdopterin guanine dinucleotide) is bound at residue serine 196.

It belongs to the prokaryotic molybdopterin-containing oxidoreductase family. Requires [4Fe-4S] cluster as cofactor. Mo-bis(molybdopterin guanine dinucleotide) is required as a cofactor. Post-translationally, exported by the Tat system. The position of the signal peptide cleavage has not been experimentally proven.

It is found in the cell membrane. Terminal reductase during anaerobic growth on various sulfoxide and N-oxide compounds. This Escherichia coli (strain K12) protein is Putative dimethyl sulfoxide reductase chain YnfE (ynfE).